The primary structure comprises 272 residues: MICOS complex subunit MIC27 (272 aa).

A mitochondrion-targeting transit peptide spans 1 to 24 (MAAKVARLAAAASSLPFVCAVYAE). Over 28–107 (SKSQLVKPKQ…YVYLKNPPPD (80 aa)) the chain is Mitochondrial intermembrane. The chain crosses the membrane as a helical span at residues 108 to 126 (FLPRVGIITISGLAGVVLA). The Mitochondrial matrix portion of the chain corresponds to 127 to 134 (RKDSRFKK). Residues 135–152 (IAYPLGLTTLGISVCYPA) traverse the membrane as a helical segment. Residues 153 to 272 (QAVVIAKITG…EDVDMYSTRS (120 aa)) are Mitochondrial intermembrane-facing. The disordered stretch occupies residues 187–272 (SKLQQESKSV…EDVDMYSTRS (86 aa)). 2 stretches are compositionally biased toward polar residues: residues 188–198 (KLQQESKSVTQ) and 206–245 (ISNVQFESAIESRSSNRTESSPIESWSTKDPLPSSGTVKT).

It belongs to the apolipoprotein O/MICOS complex subunit Mic27 family. As to quaternary structure, component of the mitochondrial contact site and cristae organizing system (MICOS) complex (also known as MINOS or MitOS complex).

It is found in the mitochondrion inner membrane. Functionally, component of the MICOS complex, a large protein complex of the mitochondrial inner membrane that plays crucial roles in the maintenance of crista junctions, inner membrane architecture, and formation of contact sites to the outer membrane. This Gallus gallus (Chicken) protein is MICOS complex subunit MIC27 (APOOL).